Consider the following 689-residue polypeptide: Pentatricopeptide repeat-containing protein At1g71460, chloroplastic (689 aa).

A chloroplast-targeting transit peptide spans 1-49 (MEVVSSLGIRDLPASLSVTTSLNHRPHRSDKDGAPAKSPIRPSRTRRPS). A disordered region spans residues 16–68 (LSVTTSLNHRPHRSDKDGAPAKSPIRPSRTRRPSTSPAKKPKPFRERDAFPSS). A compositionally biased stretch (low complexity) spans 38–52 (SPIRPSRTRRPSTSP). PPR repeat units lie at residues 75-109 (NPYIIHRDIQIFARQNNLEVALTILDYLEQRGIPV), 110-144 (NATTFSALLEACVRRKSLLHGKQVHVHIRINGLES), 145-175 (NEFLRTKLVHMYTACGSVKDAQKVFDESTSS), 176-212 (NVYSWNALLRGTVISGKKRYQDVLSTFTEMRELGVDL), 213-247 (NVYSLSNVFKSFAGASALRQGLKTHALAIKNGLFN), 248-282 (SVFLKTSLVDMYFKCGKVGLARRVFDEIVERDIVV), 283-309 (WGAMIAGLAHNKRQWEALGLFRTMISE), 315-350 (NSVILTTILPVLGDVKALKLGKEVHAHVLKSKNYVE), 351-381 (QPFVHSGLIDLYCKCGDMASGRRVFYGSKQR), 382-416 (NAISWTALMSGYAANGRFDQALRSIVWMQQEGFRP), 417-451 (DVVTIATVLPVCAELRAIKQGKEIHCYALKNLFLP), 452-482 (NVSLVTSLMVMYSKCGVPEYPIRLFDRLEQR), 483-517 (NVKAWTAMIDCYVENCDLRAGIEVFRLMLLSKHRP), 518-552 (DSVTMGRVLTVCSDLKALKLGKELHGHILKKEFES), 553-583 (IPFVSARIIKMYGKCGDLRSANFSFDAVAVK), 584-618 (GSLTWTAIIEAYGCNELFRDAINCFEQMVSRGFTP), 619-649 (NTFTFTAVLSICSQAGFVDEAYRFFNLMLRM), and 655-689 (SEEHYSLVIELLNRCGRVEEAQRLAVMSSSSSLQT).

Belongs to the PPR family. PCMP-A subfamily.

The protein localises to the plastid. It localises to the chloroplast. This Arabidopsis thaliana (Mouse-ear cress) protein is Pentatricopeptide repeat-containing protein At1g71460, chloroplastic (PCMP-A3).